Here is a 404-residue protein sequence, read N- to C-terminus: MHC class I-like protein MILL1 (404 aa).

The signal sequence occupies residues 1 to 30 (MMLSRDLRAEAAVRLWIMFLLLEDLLGACA). Positions 59–150 (EVAGPHTLRY…VTGQKGQDKG (92 aa)) are alpha-1. 3 N-linked (GlcNAc...) asparagine glycosylation sites follow: asparagine 98, asparagine 102, and asparagine 165. An alpha-2 region spans residues 151–242 (LHILQATLGC…SLRSEPLDTG (92 aa)). Intrachain disulfides connect cysteine 160/cysteine 223 and cysteine 262/cysteine 322. Positions 224 to 338 (PAQLQRHLAS…GNIEKRAVIV (115 aa)) constitute an Ig-like C1-type domain. An alpha-3 region spans residues 243 to 342 (SPMVIVTFRN…KRAVIVNTVS (100 aa)). N-linked (GlcNAc...) asparagine glycosylation is present at asparagine 323. Positions 343–373 (GEKTRQPSTSGVGGRVKKSLWTTMTTAFMVT) are connecting peptide. Serine 374 carries GPI-anchor amidated serine lipidation. Positions 375–404 (WTRKTGGDSTLLLLWWLLFFSTVLAVLTLV) are cleaved as a propeptide — removed in mature form.

It belongs to the MHC class I family. As to quaternary structure, heterodimer with B2M. Detected in skin, esophagus, tongue, skin, muscle, uterus, ovary, testis and epididymis.

It localises to the cell membrane. The polypeptide is MHC class I-like protein MILL1 (Rattus norvegicus (Rat)).